A 215-amino-acid chain; its full sequence is Putative B3 domain-containing protein Os11g0625400 (215 aa).

Positions 1–51 (MTVELEKIAGSFFISKGWKTFVHRTGLLSGQYIRFQVLTPSKINVLLFDKK) form a DNA-binding region, TF-B3 1. Residues 92 to 117 (SHTSNKETSSDSRTESMTDIPSSSDN) are disordered. Residues 95 to 107 (SNKETSSDSRTES) are compositionally biased toward basic and acidic residues. Residues 108 to 117 (MTDIPSSSDN) are compositionally biased toward polar residues. The segment at residues 123 to 215 (DIKNYISIIG…PNVKITIDVL (93 aa)) is a DNA-binding region (TF-B3 2).

It is found in the nucleus. This is Putative B3 domain-containing protein Os11g0625400 from Oryza sativa subsp. japonica (Rice).